A 152-amino-acid polypeptide reads, in one-letter code: Holo-[acyl-carrier-protein] synthase (152 aa).

Positions 7 and 60 each coordinate Mg(2+).

This sequence belongs to the P-Pant transferase superfamily. AcpS family. It depends on Mg(2+) as a cofactor.

The protein localises to the cytoplasm. The enzyme catalyses apo-[ACP] + CoA = holo-[ACP] + adenosine 3',5'-bisphosphate + H(+). Its function is as follows. Transfers the 4'-phosphopantetheine moiety from coenzyme A to a Ser of acyl-carrier-protein. The sequence is that of Holo-[acyl-carrier-protein] synthase from Bifidobacterium adolescentis (strain ATCC 15703 / DSM 20083 / NCTC 11814 / E194a).